The sequence spans 550 residues: Glucose-6-phosphate isomerase 1 (550 aa).

The Proton donor role is filled by E355. Catalysis depends on residues H386 and K512.

This sequence belongs to the GPI family.

The protein localises to the cytoplasm. It carries out the reaction alpha-D-glucose 6-phosphate = beta-D-fructose 6-phosphate. Its pathway is carbohydrate biosynthesis; gluconeogenesis. It participates in carbohydrate degradation; glycolysis; D-glyceraldehyde 3-phosphate and glycerone phosphate from D-glucose: step 2/4. In terms of biological role, catalyzes the reversible isomerization of glucose-6-phosphate to fructose-6-phosphate. The polypeptide is Glucose-6-phosphate isomerase 1 (Rhodococcus jostii (strain RHA1)).